Here is a 622-residue protein sequence, read N- to C-terminus: Low affinity potassium transport system protein Kup (622 aa).

12 consecutive transmembrane segments (helical) span residues 9-29 (LPAI…TSPL), 49-69 (VFGF…IKYL), 103-123 (VIMG…TPAI), 137-157 (PQLD…LFMI), 165-185 (VGQL…GLGL), 213-233 (VSFI…ALYA), 247-267 (WFTV…ALLL), 276-296 (PFFL…AALA), 337-357 (IYIP…IVSF), 363-383 (LAAA…ILST), 396-416 (FVAL…TANL), and 419-439 (LLSG…VMTT).

Belongs to the HAK/KUP transporter (TC 2.A.72) family.

Its subcellular location is the cell inner membrane. It carries out the reaction K(+)(in) + H(+)(in) = K(+)(out) + H(+)(out). Its function is as follows. Responsible for the low-affinity transport of potassium into the cell. Likely operates as a K(+):H(+) symporter. This chain is Low affinity potassium transport system protein Kup, found in Escherichia coli O6:K15:H31 (strain 536 / UPEC).